Here is a 284-residue protein sequence, read N- to C-terminus: Ribosome-associated protein oga1 (284 aa).

The segment at 1-284 (MSVASKNLFD…LSETDFPALA (284 aa)) is disordered. The segment covering 22–36 (TEKKTAASRDKKRSD) has biased composition (basic and acidic residues). A phosphoserine mark is found at serine 37 and serine 51. Basic and acidic residues-rich tracts occupy residues 52–73 (RKRD…ADQP) and 119–141 (GREF…ERGW). At threonine 160 the chain carries Phosphothreonine. Serine 162 is modified (phosphoserine). Phosphothreonine is present on threonine 166. Composition is skewed to basic and acidic residues over residues 172-186 (ENVK…ERKS) and 194-209 (TVEK…KSAP). Positions 214-224 (ASLKKSASQKK) are enriched in low complexity. Basic and acidic residues predominate over residues 226-237 (AAKESKPKKVLL). Residues 245–254 (ARPARGGRPN) show a composition bias toward low complexity. The segment covering 263-277 (ETASKTQQAPPTLSE) has biased composition (polar residues).

The protein belongs to the STM1 family. As to quaternary structure, associates with mature 80S ribosomes. Binds to the head domain of the 40S ribosomal subunit and prevents mRNA binding by inserting its alpha-helix domain towards the mRNA entry tunnel at the decoding site, where it blocks the binding of tRNA and mRNA at the A- and P-sites. Interacts with eEF2; interaction sequesters eEF2 at the A-site of the ribosome, thereby blocking the interaction sites of the mRNA-tRNA complex, promoting ribosome stabilization and hibernation. Interacts with sad1. Phosphorylation by TORC1 upon nutrient replenishment inhibits STM1 and causes its release from dormant ribosomes.

The protein localises to the cytoplasm. Ribosome preservation factor that protect a small pool of nontranslating, vacant ribosomes in cells under nutrient starvation conditions. Under nutrient-limiting conditions, cells reduce ribosome biogenesis and degrade ribosomes via autophagy (ribophagy) or proteasomal degradation. To avoid excessive degradation during starvation, STM1 binds to and protects 80S ribosomes from proteasomal degradation. Under nutrient-sufficient conditions, TORC1 phosphorylates and inhibits STM1 to prevent formation of dormant 80S ribosomes. Acts as an inhibitor of mRNA translation by promoting ribosome hibernation: clamps the two ribosomal subunits, thereby preventing their dissociation, and inhibits translation by excluding mRNA-binding. Acts via its association with eEF2, promoting ribosome stabilization and storage in an inactive state. May also repress translation by preventing association of eEF3 with ribosomes. Binds specifically G4 quadruplex (these are four-stranded right-handed helices, stabilized by guanine base quartets) and purine motif triplex (characterized by a third, antiparallel purine-rich DNA strand located within the major groove of a homopurine stretch of duplex DNA) nucleic acid structures. These structures may be present at telomeres or in rRNAs. Extends chronological lifespan when overexpressed. The protein is Ribosome-associated protein oga1 of Schizosaccharomyces pombe (strain 972 / ATCC 24843) (Fission yeast).